The sequence spans 73 residues: Sec-independent protein translocase protein TatA (73 aa).

The helical transmembrane segment at 1–21 (MGSFSIWHWMIVLVIVLLVFG) threads the bilayer.

This sequence belongs to the TatA/E family. The Tat system comprises two distinct complexes: a TatABC complex, containing multiple copies of TatA, TatB and TatC subunits, and a separate TatA complex, containing only TatA subunits. Substrates initially bind to the TatABC complex, which probably triggers association of the separate TatA complex to form the active translocon.

It is found in the cell inner membrane. Functionally, part of the twin-arginine translocation (Tat) system that transports large folded proteins containing a characteristic twin-arginine motif in their signal peptide across membranes. TatA could form the protein-conducting channel of the Tat system. The chain is Sec-independent protein translocase protein TatA from Mesorhizobium japonicum (strain LMG 29417 / CECT 9101 / MAFF 303099) (Mesorhizobium loti (strain MAFF 303099)).